The sequence spans 662 residues: Protein transport Sec1b (662 aa).

The protein belongs to the STXBP/unc-18/SEC1 family.

Its function is as follows. Involved in the vesicle trafficking. Binds syntaxins. This is Protein transport Sec1b (SEC1B) from Arabidopsis thaliana (Mouse-ear cress).